Consider the following 135-residue polypeptide: Ribonuclease P protein component 2 (135 aa).

This sequence belongs to the eukaryotic/archaeal RNase P protein component 2 family. Consists of a catalytic RNA component and at least 4-5 protein subunits.

It is found in the cytoplasm. It catalyses the reaction Endonucleolytic cleavage of RNA, removing 5'-extranucleotides from tRNA precursor.. Part of ribonuclease P, a protein complex that generates mature tRNA molecules by cleaving their 5'-ends. The chain is Ribonuclease P protein component 2 from Methanococcus aeolicus (strain ATCC BAA-1280 / DSM 17508 / OCM 812 / Nankai-3).